Consider the following 330-residue polypeptide: Aspartate--ammonia ligase (330 aa).

Belongs to the class-II aminoacyl-tRNA synthetase family. AsnA subfamily.

It is found in the cytoplasm. It catalyses the reaction L-aspartate + NH4(+) + ATP = L-asparagine + AMP + diphosphate + H(+). Its pathway is amino-acid biosynthesis; L-asparagine biosynthesis; L-asparagine from L-aspartate (ammonia route): step 1/1. In Haemophilus influenzae (strain PittGG), this protein is Aspartate--ammonia ligase.